A 119-amino-acid chain; its full sequence is LNVLCNNPHTADCNNDAQVDRYFREGTTCLMSPACTSEGYASQHECQQACFVGGEDHSSEMHSSCLGDPPTSCAEGTDITYYDSDSKTCKVLAASCPSGENTFESEVECQVACGAPIEG.

Residues 1-53 (LNVLCNNPHTADCNNDAQVDRYFREGTTCLMSPACTSEGYASQHECQQACFVG) form the BPTI/Kunitz inhibitor 1 domain. Disulfide bonds link Cys-5-Cys-50, Cys-13-Cys-35, and Cys-29-Cys-46. The tract at residues 54-60 (GEDHSSE) is linker. One can recognise a BPTI/Kunitz inhibitor 2 domain in the interval 61-116 (MHSSCLGDPPTSCAEGTDITYYDSDSKTCKVLAASCPSGENTFESEVECQVACGAP). Disulfide bonds link Cys-65/Cys-113, Cys-73/Cys-96, and Cys-89/Cys-109.

Expressed in salivary glands.

Its subcellular location is the cytoplasmic vesicle. The protein resides in the secretory vesicle. It is found in the secreted. Tick salivary thrombin inhibitor that plays an important part in the anti-hemostatic strategy of ticks. Is a potent and highly selective thrombin inhibitor (Ki=10 pM). In Ornithodoros moubata (Soft tick), this protein is Ornithodorin.